The following is a 510-amino-acid chain: UDP-N-acetylmuramoylalanine--D-glutamate ligase (510 aa).

138-144 (GTNGKTT) provides a ligand contact to ATP. Residues 294–316 (FDEPAPAPRRKKDAPPPTRAGGR) form a disordered region.

This sequence belongs to the MurCDEF family.

It is found in the cytoplasm. It carries out the reaction UDP-N-acetyl-alpha-D-muramoyl-L-alanine + D-glutamate + ATP = UDP-N-acetyl-alpha-D-muramoyl-L-alanyl-D-glutamate + ADP + phosphate + H(+). Its pathway is cell wall biogenesis; peptidoglycan biosynthesis. Its function is as follows. Cell wall formation. Catalyzes the addition of glutamate to the nucleotide precursor UDP-N-acetylmuramoyl-L-alanine (UMA). This chain is UDP-N-acetylmuramoylalanine--D-glutamate ligase, found in Bordetella pertussis (strain Tohama I / ATCC BAA-589 / NCTC 13251).